A 122-amino-acid chain; its full sequence is Large ribosomal subunit protein uL14c (122 aa).

This sequence belongs to the universal ribosomal protein uL14 family. In terms of assembly, part of the 50S ribosomal subunit.

It is found in the plastid. Its subcellular location is the chloroplast. Its function is as follows. Binds to 23S rRNA. The polypeptide is Large ribosomal subunit protein uL14c (Chlorella vulgaris (Green alga)).